Reading from the N-terminus, the 507-residue chain is Proton-coupled zinc antiporter SLC30A1 (507 aa).

At 1–10 the chain is on the cytoplasmic side; sequence MGCWGRNRGR. A helical membrane pass occupies residues 11 to 31; sequence LLCMLLLTFMFMVLEVVVSRV. Residues 32-35 are Extracellular-facing; that stretch reads TASL. Residues 36–56 form a helical membrane-spanning segment; sequence AMLSDSFHMLSDVLALVVALV. Zn(2+) is bound by residues H43 and D47. Residues 57–78 lie on the Cytoplasmic side of the membrane; that stretch reads AERFARRTHATQKNTFGWIRAE. A helical membrane pass occupies residues 79–99; sequence VMGALVNAIFLTGLCFAILLE. At 100 to 113 the chain is on the extracellular side; that stretch reads AVERFIEPHEMQQP. Residues 114–134 form a helical membrane-spanning segment; that stretch reads LVVLSVGVAGLLVNVLGLCLF. Residues 135–247 lie on the Cytoplasmic side of the membrane; that stretch reads HHHSGEGQGA…RAGQLNMRGV (113 aa). A disordered region spans residues 140 to 218; that stretch reads EGQGAGHGHS…EKLRSDDPVD (79 aa). The tract at residues 145 to 156 is 6 X 2 AA approximate repeats of H-G; that stretch reads GHGHSHGHGHGH. Residues 147-165 show a composition bias toward basic residues; sequence GHSHGHGHGHLAKGARKAG. Residues 188-200 are compositionally biased toward polar residues; that stretch reads TNTLVANTSNSNG. Residues 204–215 show a composition bias toward basic and acidic residues; sequence DQAEPEKLRSDD. Residues 248–268 traverse the membrane as a helical segment; that stretch reads FLHVLGDALGSVIVVVNALVF. Zn(2+)-binding residues include H250 and D254. The Extracellular portion of the chain corresponds to 269-307; sequence YFSWKGCTEDDFCVNPCFPDPCKSSVELMNSTQAPMHEA. N-linked (GlcNAc...) asparagine glycosylation occurs at N298. The helical transmembrane segment at 308 to 328 threads the bilayer; the sequence is GPCWVLYLDPTLCIIMVCILL. The Cytoplasmic segment spans residues 329 to 507; it reads YTTYPLLKES…VPNKQPESSL (179 aa). S506 is modified (phosphoserine).

It belongs to the cation diffusion facilitator (CDF) transporter (TC 2.A.4) family. SLC30A subfamily. Homodimer. Interacts with TMEM163. Interacts and forms a complex with TMC6 and TMC8; the interaction regulates zinc transport into the ER. In terms of tissue distribution, widely expressed. Detected in duodenum and jejunum but not in ileum and colon (at protein level). Expressed by neuroglial cells (at protein level).

Its subcellular location is the cell membrane. The protein localises to the basolateral cell membrane. It localises to the cytoplasmic vesicle membrane. The protein resides in the cytoplasm. It is found in the endoplasmic reticulum membrane. Its subcellular location is the golgi apparatus membrane. The protein localises to the nucleus membrane. It carries out the reaction Zn(2+)(in) + 2 H(+)(out) = Zn(2+)(out) + 2 H(+)(in). Its activity is regulated as follows. Calcium-dependent. Its function is as follows. Zinc ion:proton antiporter that could function at the plasma membrane mediating zinc efflux from cells against its electrochemical gradient protecting them from intracellular zinc accumulation and toxicity. Alternatively, could prevent the transport to the plasma membrane of CACNB2, the L-type calcium channels regulatory subunit, through a yet to be defined mechanism. By modulating the expression of these channels at the plasma membrane, could prevent calcium and zinc influx into cells. By the same mechanism, could also prevent L-type calcium channels-mediated heavy metal influx into cells. In some cells, could also function as a zinc ion:proton antiporter mediating zinc entry into the lumen of cytoplasmic vesicles. In macrophages, can increase zinc ions concentration into the lumen of cytoplasmic vesicles containing engulfed bacteria and could help inactivate them. Forms a complex with TMC6/EVER1 and TMC8/EVER2 at the ER membrane of keratynocytes which facilitates zinc uptake into the ER. Down-regulates the activity of transcription factors induced by zinc and cytokines. The polypeptide is Proton-coupled zinc antiporter SLC30A1 (Rattus norvegicus (Rat)).